A 358-amino-acid chain; its full sequence is Mannonate dehydratase (358 aa).

The protein belongs to the mannonate dehydratase family. It depends on Fe(2+) as a cofactor. The cofactor is Mn(2+).

The enzyme catalyses D-mannonate = 2-dehydro-3-deoxy-D-gluconate + H2O. It functions in the pathway carbohydrate metabolism; pentose and glucuronate interconversion. Catalyzes the dehydration of D-mannonate. In Lachnoclostridium phytofermentans (strain ATCC 700394 / DSM 18823 / ISDg) (Clostridium phytofermentans), this protein is Mannonate dehydratase.